A 456-amino-acid polypeptide reads, in one-letter code: Bifunctional protein GlmU (456 aa).

A pyrophosphorylase region spans residues Met-1–Arg-229. Residues Leu-11 to Gly-14, Lys-25, Gln-76, Gly-81 to Thr-82, Tyr-103 to Asp-105, Gly-140, Glu-154, Asn-169, and Asn-227 contribute to the UDP-N-acetyl-alpha-D-glucosamine site. Asp-105 is a binding site for Mg(2+). Asn-227 serves as a coordination point for Mg(2+). The tract at residues Leu-230–Ala-250 is linker. The interval Gly-251–Lys-456 is N-acetyltransferase. Positions 333 and 351 each coordinate UDP-N-acetyl-alpha-D-glucosamine. His-363 functions as the Proton acceptor in the catalytic mechanism. Residues Tyr-366 and Asn-377 each coordinate UDP-N-acetyl-alpha-D-glucosamine. Residues Ala-380, Asn-386–Tyr-387, Ser-405, Ala-423, and Arg-440 each bind acetyl-CoA.

It in the N-terminal section; belongs to the N-acetylglucosamine-1-phosphate uridyltransferase family. This sequence in the C-terminal section; belongs to the transferase hexapeptide repeat family. In terms of assembly, homotrimer. Mg(2+) is required as a cofactor.

It localises to the cytoplasm. It catalyses the reaction alpha-D-glucosamine 1-phosphate + acetyl-CoA = N-acetyl-alpha-D-glucosamine 1-phosphate + CoA + H(+). It carries out the reaction N-acetyl-alpha-D-glucosamine 1-phosphate + UTP + H(+) = UDP-N-acetyl-alpha-D-glucosamine + diphosphate. The protein operates within nucleotide-sugar biosynthesis; UDP-N-acetyl-alpha-D-glucosamine biosynthesis; N-acetyl-alpha-D-glucosamine 1-phosphate from alpha-D-glucosamine 6-phosphate (route II): step 2/2. It functions in the pathway nucleotide-sugar biosynthesis; UDP-N-acetyl-alpha-D-glucosamine biosynthesis; UDP-N-acetyl-alpha-D-glucosamine from N-acetyl-alpha-D-glucosamine 1-phosphate: step 1/1. Its pathway is bacterial outer membrane biogenesis; LPS lipid A biosynthesis. Catalyzes the last two sequential reactions in the de novo biosynthetic pathway for UDP-N-acetylglucosamine (UDP-GlcNAc). The C-terminal domain catalyzes the transfer of acetyl group from acetyl coenzyme A to glucosamine-1-phosphate (GlcN-1-P) to produce N-acetylglucosamine-1-phosphate (GlcNAc-1-P), which is converted into UDP-GlcNAc by the transfer of uridine 5-monophosphate (from uridine 5-triphosphate), a reaction catalyzed by the N-terminal domain. This Escherichia coli O157:H7 (strain EC4115 / EHEC) protein is Bifunctional protein GlmU.